Reading from the N-terminus, the 377-residue chain is DNA replication and repair protein RecF (377 aa).

30–37 contributes to the ATP binding site; it reads GNNGSGKS.

The protein belongs to the RecF family.

It is found in the cytoplasm. Its function is as follows. The RecF protein is involved in DNA metabolism; it is required for DNA replication and normal SOS inducibility. RecF binds preferentially to single-stranded, linear DNA. It also seems to bind ATP. The protein is DNA replication and repair protein RecF of Colwellia psychrerythraea (strain 34H / ATCC BAA-681) (Vibrio psychroerythus).